Reading from the N-terminus, the 233-residue chain is Nickel import system ATP-binding protein NikE (233 aa).

An ABC transporter domain is found at 2–228 (IELKHVTFGY…DRHPYTKELV (227 aa)). An ATP-binding site is contributed by 35–42 (GESGCGKS).

Belongs to the ABC transporter superfamily. The complex is composed of two ATP-binding proteins (NikD and NikE), two transmembrane proteins (NikB and NikC) and a solute-binding protein (NikA).

Its subcellular location is the cell membrane. It catalyses the reaction Ni(2+)(out) + ATP + H2O = Ni(2+)(in) + ADP + phosphate + H(+). Functionally, part of the ABC transporter complex NikABCDE (Opp2) involved in nickel import. Probably responsible for energy coupling to the transport system. This Staphylococcus aureus (strain MSSA476) protein is Nickel import system ATP-binding protein NikE.